The sequence spans 402 residues: Enoyl-[acyl-carrier-protein] reductase [NADH] (402 aa).

Residues 48 to 53 (GASSGY), 74 to 75 (FE), 111 to 112 (DA), and 140 to 141 (LA) each bind NAD(+). Tyr-226 is a substrate binding site. Catalysis depends on Tyr-236, which acts as the Proton donor. NAD(+) contacts are provided by residues Lys-245 and 274-276 (VVT).

The protein belongs to the TER reductase family. As to quaternary structure, monomer.

The enzyme catalyses a 2,3-saturated acyl-[ACP] + NAD(+) = a (2E)-enoyl-[ACP] + NADH + H(+). It functions in the pathway lipid metabolism; fatty acid biosynthesis. Involved in the final reduction of the elongation cycle of fatty acid synthesis (FAS II). Catalyzes the reduction of a carbon-carbon double bond in an enoyl moiety that is covalently linked to an acyl carrier protein (ACP). This is Enoyl-[acyl-carrier-protein] reductase [NADH] from Xanthomonas axonopodis pv. citri (strain 306).